We begin with the raw amino-acid sequence, 106 residues long: Phosphoribosyl-ATP pyrophosphatase 1 (106 aa).

This sequence belongs to the PRA-PH family.

It localises to the cytoplasm. It catalyses the reaction 1-(5-phospho-beta-D-ribosyl)-ATP + H2O = 1-(5-phospho-beta-D-ribosyl)-5'-AMP + diphosphate + H(+). It functions in the pathway amino-acid biosynthesis; L-histidine biosynthesis; L-histidine from 5-phospho-alpha-D-ribose 1-diphosphate: step 2/9. The chain is Phosphoribosyl-ATP pyrophosphatase 1 (hisE1) from Bradyrhizobium diazoefficiens (strain JCM 10833 / BCRC 13528 / IAM 13628 / NBRC 14792 / USDA 110).